The following is a 202-amino-acid chain: Tetranectin (202 aa).

A signal peptide spans 1–21; sequence MELWGAYLLLCLFSLLTQVTT. O-linked (GalNAc...) threonine glycosylation occurs at Thr-25. Intrachain disulfides connect Cys-71–Cys-81, Cys-98–Cys-197, and Cys-173–Cys-189. The C-type lectin domain occupies 77–198; it reads VHMKCFLAFT…CRDQLPYICQ (122 aa).

As to quaternary structure, homotrimer. As to expression, found in plasma.

It localises to the secreted. Functionally, tetranectin binds to plasminogen and to isolated kringle 4. May be involved in the packaging of molecules destined for exocytosis. Plays a role in retinal function. The polypeptide is Tetranectin (CLEC3B) (Homo sapiens (Human)).